Consider the following 916-residue polypeptide: Oxysterol-binding protein 2 (916 aa).

3 disordered regions span residues 1–20 (MGKA…SRGL), 34–121 (TAAP…PFTK), and 139–163 (PESG…TPLG). A compositionally biased stretch (pro residues) spans 49–58 (EPKPQPQPVP). Low complexity predominate over residues 79-92 (RSEPVSETTSEPEP). Polar residues predominate over residues 99–113 (ELLQGSRPGSESSSG). The segment covering 144-155 (LPALKPLPLLRP) has biased composition (low complexity). Positions 182–274 (LDSFEGWLLK…WITALELAKA (93 aa)) constitute a PH domain. 2 disordered regions span residues 282–301 (THSD…DKSE) and 417–448 (FHSA…EEDE). Position 287 is a phosphoserine (S287). S763 carries the post-translational modification Phosphoserine. The tract at residues 813–842 (EGVAPTDSRLRPDQRLMEKGRWDEANTEKQ) is disordered.

Belongs to the OSBP family. As to quaternary structure, interacts with CCDC159. Expressed mainly in retina, testis, and fetal liver.

Its subcellular location is the membrane. It localises to the cytoplasmic vesicle. The protein localises to the secretory vesicle. It is found in the acrosome. Functionally, binds 7-ketocholesterol. Acts during spermatid development where its function is required prior to the removal of cytoplasm from the sperm head. In Homo sapiens (Human), this protein is Oxysterol-binding protein 2 (OSBP2).